The primary structure comprises 192 residues: Imidazole glycerol phosphate synthase subunit HisH (192 aa).

The 192-residue stretch at 1–192 (MIAIIDYGLG…QALKGGFIND (192 aa)) folds into the Glutamine amidotransferase type-1 domain. The active-site Nucleophile is Cys77. Active-site residues include His169 and Glu171.

In terms of assembly, heterodimer of HisH and HisF.

It localises to the cytoplasm. It catalyses the reaction 5-[(5-phospho-1-deoxy-D-ribulos-1-ylimino)methylamino]-1-(5-phospho-beta-D-ribosyl)imidazole-4-carboxamide + L-glutamine = D-erythro-1-(imidazol-4-yl)glycerol 3-phosphate + 5-amino-1-(5-phospho-beta-D-ribosyl)imidazole-4-carboxamide + L-glutamate + H(+). The enzyme catalyses L-glutamine + H2O = L-glutamate + NH4(+). The protein operates within amino-acid biosynthesis; L-histidine biosynthesis; L-histidine from 5-phospho-alpha-D-ribose 1-diphosphate: step 5/9. In terms of biological role, IGPS catalyzes the conversion of PRFAR and glutamine to IGP, AICAR and glutamate. The HisH subunit catalyzes the hydrolysis of glutamine to glutamate and ammonia as part of the synthesis of IGP and AICAR. The resulting ammonia molecule is channeled to the active site of HisF. The protein is Imidazole glycerol phosphate synthase subunit HisH of Staphylococcus epidermidis (strain ATCC 12228 / FDA PCI 1200).